A 475-amino-acid polypeptide reads, in one-letter code: Alpha,alpha-trehalose-phosphate synthase [UDP-forming] (475 aa).

Residues Tyr-93 and Asp-147 each coordinate D-glucose 6-phosphate. The UDP site is built by Arg-285 and Lys-290. Arg-285 and Lys-290 together coordinate UDP-alpha-D-glucose. Residue Arg-323 participates in D-glucose 6-phosphate binding. Residue 384–392 (DGMNLVSYE) participates in UDP-alpha-D-glucose binding. 388 to 392 (LVSYE) provides a ligand contact to UDP.

It belongs to the glycosyltransferase 20 family.

It catalyses the reaction D-glucose 6-phosphate + UDP-alpha-D-glucose = alpha,alpha-trehalose 6-phosphate + UDP + H(+). It participates in carbohydrate biosynthesis. Its function is as follows. Synthase catalytic subunit of the trehalose synthase complex that catalyzes the production of trehalose from glucose-6-phosphate and UDP-alpha-D-glucose in a two step process. The sequence is that of Alpha,alpha-trehalose-phosphate synthase [UDP-forming] from Pichia angusta (Yeast).